A 245-amino-acid polypeptide reads, in one-letter code: Ribonuclease 3 (245 aa).

The region spanning 19-144 (ASILEERTGH…LIATIYLDGG (126 aa)) is the RNase III domain. A Mg(2+)-binding site is contributed by Glu57. The active site involves Asp61. Mg(2+)-binding residues include Asp130 and Glu133. Glu133 is a catalytic residue. A DRBM domain is found at 169–238 (DAKTELQEWA…AEAMLYREGV (70 aa)).

This sequence belongs to the ribonuclease III family. In terms of assembly, homodimer. Requires Mg(2+) as cofactor.

Its subcellular location is the cytoplasm. The enzyme catalyses Endonucleolytic cleavage to 5'-phosphomonoester.. In terms of biological role, digests double-stranded RNA. Involved in the processing of primary rRNA transcript to yield the immediate precursors to the large and small rRNAs (23S and 16S). Processes some mRNAs, and tRNAs when they are encoded in the rRNA operon. Processes pre-crRNA and tracrRNA of type II CRISPR loci if present in the organism. The protein is Ribonuclease 3 of Brucella abortus (strain S19).